Consider the following 117-residue polypeptide: Protein TCL1B2 (117 aa).

This sequence belongs to the TCL1 family.

The polypeptide is Protein TCL1B2 (Tcl1b2) (Mus musculus (Mouse)).